The following is a 290-amino-acid chain: Small ribosomal subunit biogenesis GTPase RsgA (290 aa).

The CP-type G domain occupies 61-218; that stretch reads KSELVRPTVA…IVDTPGFSTL (158 aa). GTP contacts are provided by residues 110-113 and 161-169; these read NKID and GPSGAGKST. Zn(2+) contacts are provided by Cys-243, Cys-248, His-250, and Cys-256.

This sequence belongs to the TRAFAC class YlqF/YawG GTPase family. RsgA subfamily. Monomer. Associates with 30S ribosomal subunit, binds 16S rRNA. Zn(2+) serves as cofactor.

It localises to the cytoplasm. Its function is as follows. One of several proteins that assist in the late maturation steps of the functional core of the 30S ribosomal subunit. Helps release RbfA from mature subunits. May play a role in the assembly of ribosomal proteins into the subunit. Circularly permuted GTPase that catalyzes slow GTP hydrolysis, GTPase activity is stimulated by the 30S ribosomal subunit. The protein is Small ribosomal subunit biogenesis GTPase RsgA of Clostridium beijerinckii (strain ATCC 51743 / NCIMB 8052) (Clostridium acetobutylicum).